A 370-amino-acid polypeptide reads, in one-letter code: Cytochrome b (370 aa).

4 helical membrane-spanning segments follow: residues F25–V45, W69–I90, W105–L125, and F170–L190. Heme b contacts are provided by H75 and H89. Residues H174 and H188 each contribute to the heme b site. An a ubiquinone-binding site is contributed by H193. A run of 4 helical transmembrane segments spans residues Y218–F238, L280–H300, L312–T332, and F339–P358.

It belongs to the cytochrome b family. As to quaternary structure, the cytochrome bc1 complex contains 3 respiratory subunits (MT-CYB, CYC1 and UQCRFS1), 2 core proteins (UQCRC1 and UQCRC2) and probably 6 low-molecular weight proteins. It depends on heme b as a cofactor.

The protein localises to the mitochondrion inner membrane. Functionally, component of the ubiquinol-cytochrome c reductase complex (complex III or cytochrome b-c1 complex) that is part of the mitochondrial respiratory chain. The b-c1 complex mediates electron transfer from ubiquinol to cytochrome c. Contributes to the generation of a proton gradient across the mitochondrial membrane that is then used for ATP synthesis. This is Cytochrome b (MT-CYB) from Chilabothrus subflavus (Jamaican yellow boa).